Consider the following 338-residue polypeptide: uncharacterized protein (338 aa).

The interval 1–72 (MASPPILSRE…LNPVEDYDSK (72 aa)) is disordered. The span at 24–38 (GGNSEVNIDPSASSS) shows a compositional bias: polar residues. Residues 49–58 (ADTKIDPHLL) show a composition bias toward basic and acidic residues. Residues 59-68 (EEDDLNPVED) show a composition bias toward acidic residues.

Its subcellular location is the cytoplasm. It localises to the nucleus. This is an uncharacterized protein from Schizosaccharomyces pombe (strain 972 / ATCC 24843) (Fission yeast).